Here is a 461-residue protein sequence, read N- to C-terminus: Lysosomal proton-coupled steroid conjugate and bile acid symporter SLC46A3 (461 aa).

Positions 1 to 25 (MKIPFVEPVICLSVFAVTLNSPLTT) are cleaved as a signal peptide. Over 26–70 (QYVYRRIWEETGNYSIALESNTSECAKNKSSPIFAFQEEVQKKVS) the chain is Extracellular. 3 N-linked (GlcNAc...) asparagine glycosylation sites follow: Asn-38, Asn-46, and Asn-53. A helical transmembrane segment spans residues 71-91 (LFNLEMDISGLIPGLVSTFVF). The Cytoplasmic portion of the chain corresponds to 92-101 (LSHSDHGGRK). Residues 102-124 (FPLILSSVGALANSAWLCLLSYF) form a helical membrane-spanning segment. At 125–133 (ALPIQLLIA) the chain is on the extracellular side. The chain crosses the membrane as a helical span at residues 134-156 (STFIGALFGNYTTFLGASFAYIV). Topologically, residues 157–170 (DQCKEKKQRTIRIA) are cytoplasmic. The helical transmembrane segment at 171–191 (IIDFLFGVVSGLTGLSSGYFI) threads the bilayer. Residues 192–195 (RGLG) lie on the Extracellular side of the membrane. Residues 196 to 216 (FVWSFLIVTVALFVNLIYILL) form a helical membrane-spanning segment. Residues 217–261 (FLEDSMKESSSQNISVSWTETFKNLFHRTYMLFKNASGEQQSLCC) lie on the Cytoplasmic side of the membrane. The helical transmembrane segment at 262-282 (LLLFTMITYFFVTIGVSPIFV) threads the bilayer. The Extracellular portion of the chain corresponds to 283–294 (LYELDSPLCWDE). The chain crosses the membrane as a helical span at residues 295 to 315 (VLIGYGSALGSVTFFSSFLGI). Residues 316–324 (WLFSYCMED) are Cytoplasmic-facing. Residues 325–345 (IHMAFIGTFTTMVGMAMTAFA) form a helical membrane-spanning segment. The Extracellular portion of the chain corresponds to 346–347 (RT). The chain crosses the membrane as a helical span at residues 348 to 368 (TLMMFLVRLPFLFTVMPLSVL). Topologically, residues 369–382 (RSMISKVVHSTEQG) are cytoplasmic. The helical transmembrane segment at 383 to 403 (TMFACLAFLETLGGITAVSTF) threads the bilayer. The Extracellular portion of the chain corresponds to 404–415 (NGIYSATVAWCK). The helical transmembrane segment at 416 to 436 (GFVFLLSAVLLLIPAISLCVI) threads the bilayer. Residues 437–461 (KYVSRNTGSYVLLIQEESSEDTSDR) lie on the Cytoplasmic side of the membrane. A Tyrosine-based lysosomal-sorting motif motif is present at residues 446–449 (YVLL).

Belongs to the major facilitator superfamily. SLC46A family.

It localises to the lysosome membrane. It carries out the reaction estrone 3-sulfate(out) + n H(+)(out) = estrone 3-sulfate(in) + n H(+)(in). The enzyme catalyses 25-hydroxyvitamin D3 sulfate(out) + n H(+)(out) = 25-hydroxyvitamin D3 sulfate(in) + n H(+)(in). It catalyses the reaction cholate(out) + n H(+)(out) = cholate(in) + n H(+)(in). The catalysed reaction is glycocholate(out) + n H(+)(out) = glycocholate(in) + n H(+)(in). It carries out the reaction taurocholate(out) + n H(+)(out) = taurocholate(in) + n H(+)(in). The enzyme catalyses dehydroepiandrosterone 3-sulfate(out) + n H(+)(out) = dehydroepiandrosterone 3-sulfate(in) + n H(+)(in). It catalyses the reaction N-acetyl-D-muramoyl-L-alanyl-D-isoglutamine(out) + n H(+)(out) = N-acetyl-D-muramoyl-L-alanyl-D-isoglutamine(in) + n H(+)(in). The catalysed reaction is 2',3'-cGAMP(out) + n H(+)(out) = 2',3'-cGAMP(in) + n H(+)(in). In terms of biological role, lysosomal proton-coupled steroid conjugate and bile acid transporter. Preferentially recognizes lipophilic steroid conjugates or bile acis as endogenous substrates and seems to mediate escape from lysosomes to the cytoplasm. Modulates hepatic cytosolic copper homeostasis, maybe acting as a lysosomal copper transporter and sequestering copper ions in the lysosome. Delivers pathogen-associated molecular patterns to cytosolic pattern recognition receptors as part of the innate immune response to microbes. Selectively transports bacterial muramyl dipeptide (MDP) into the cytosol for recognition by NOD2, triggering inflammatory responses. Likely acts as a redundant importer of cyclic GMP-AMP dinucleotides (cGAMPs) in monocyte and macrophage cell lineages. The transport mechanism, its electrogenicity and stoichiometry remain to be elucidated. The protein is Lysosomal proton-coupled steroid conjugate and bile acid symporter SLC46A3 (SLC46A3) of Bos taurus (Bovine).